We begin with the raw amino-acid sequence, 507 residues long: uncharacterized protein (507 aa).

Low complexity predominate over residues 1-12; that stretch reads MEKSISSISKAS. The tract at residues 1 to 20 is disordered; that stretch reads MEKSISSISKASMNSDEKLD. A run of 12 helical transmembrane segments spans residues 57-74, 100-120, 126-146, 157-177, 189-209, 221-241, 283-303, 326-346, 353-373, 379-399, 416-436, and 445-465; these read FDFR…FNAL, IMIS…SYLY, ARIL…QAAV, WFLG…LTTF, IFYA…YGVF, YLFL…FLVL, VFKH…GVPL, LMTV…AFIS, GIVL…YGSI, IGVS…SSVL, VFTS…ANIF, and VPAL…VASI.

Belongs to the major facilitator superfamily. Allantoate permease family.

It is found in the endoplasmic reticulum. The protein localises to the membrane. This is an uncharacterized protein from Schizosaccharomyces pombe (strain 972 / ATCC 24843) (Fission yeast).